Here is an 85-residue protein sequence, read N- to C-terminus: 4-hydroxyphenylacetate decarboxylase small subunit (85 aa).

Positions 4, 7, 20, 34, 43, 46, 60, and 78 each coordinate [4Fe-4S] cluster.

The protein belongs to the HPA decarboxylase small subunit family. Heterooctamer consisting of 4 large (HpdB) subunits and 4 small (HpdC) subunits, arranged as a tetramer of heterodimers. It depends on [4Fe-4S] cluster as a cofactor.

It carries out the reaction 4-hydroxyphenylacetate + H(+) = 4-methylphenol + CO2. The enzyme catalyses 3,4-dihydroxyphenylacetate + H(+) = 4-methylcatechol + CO2. Its function is as follows. Component of the HPA decarboxylase that decarboxylates phenylacetates with a hydroxyl group in the p-position. Active toward 4-hydroxyphenylacetate and 3,4-dihydroxyphenylacetate, forming 4-methylphenol and 4-methylcatechol, respectively. Is likely involved in the catabolism of aromatic amino acids such as tyrosine fermentation. 4-methylphenol (p-cresol) formation provides metabolic toxicity, which allows an active suppression of other microbes and may provide growth advantages for the producers in highly competitive environments. The small subunit is essential for enzymatic activity of HPA decarboxylase, and also seems to be involved in the regulation of the enzyme oligomeric state and catalytic activity. The protein is 4-hydroxyphenylacetate decarboxylase small subunit of Clostridioides difficile (strain 630) (Peptoclostridium difficile).